The sequence spans 394 residues: Putative 8-amino-7-oxononanoate synthase (394 aa).

A substrate-binding site is contributed by Arg21. Position 107 to 108 (Gly107 to Tyr108) interacts with pyridoxal 5'-phosphate. His132 lines the substrate pocket. Residues Ser180, Asp205 to His208, and Thr236 to Lys239 contribute to the pyridoxal 5'-phosphate site. Lys239 bears the N6-(pyridoxal phosphate)lysine mark. Position 361 (Thr361) interacts with substrate.

The protein belongs to the class-II pyridoxal-phosphate-dependent aminotransferase family. BioF subfamily. Homodimer. Requires pyridoxal 5'-phosphate as cofactor.

It carries out the reaction 6-carboxyhexanoyl-[ACP] + L-alanine + H(+) = (8S)-8-amino-7-oxononanoate + holo-[ACP] + CO2. It functions in the pathway cofactor biosynthesis; biotin biosynthesis. Catalyzes the decarboxylative condensation of pimeloyl-[acyl-carrier protein] and L-alanine to produce 8-amino-7-oxononanoate (AON), [acyl-carrier protein], and carbon dioxide. The polypeptide is Putative 8-amino-7-oxononanoate synthase (bioF) (Acaryochloris marina (strain MBIC 11017)).